A 1401-amino-acid chain; its full sequence is MQCYTELLSPSGVTHALAIPFLSASAENLVVVKTSVLQIFSLLKVQHHSRGETIETKSARPDQVETTKLVLEREYPLSGTVVDICRVKILNSKSGGEALLLAFRNAKLSLVEWDPERHGISTISIHYYERDDLTRSPWVPDLSSCGSILSVDPSSRCAVFNFGIRNLAILPFHQPGDDLAMDDYEFHLHQDDLNQVSDHVGNGLKSKDSTVYQTPYASSFVLPLTALDPSILHPVSLAFLYEYREPTFGILYSQIATSHALLSERKDSIFYTVFTLDLEQRASTTLLSVPKLPSDLFKVVALPPPVGGALLIGSNELVHVDQAGKTNAVGVNEFARQVSAFSMVDQSDLALRLEGCVVEHISDSTGDLLLVLSSGNMVLVHFQLDGRSVSGISLRPLPTQAGGTIMKSAASSSAFLGSGRVFFGSEDADSVLLSWSSMPNPKKSRPRMSNVAEDREEASDDSQSEEDAYEDDLYTAEPETPALGRRPSAETTGVGAYIFQTLDRLPNIGPLRDITLGKPASTVENTGRLIKNACSELELVAAQGSGRNGGLVLMKREIEPDVTASFDAQSVQEVWTAVVALGSGAPLVLDEQQINQEYRQYVILSKPETPDKETSEVFIADTQDLKPFRAPEFNPNNDVTIEIGTLSCKKRVVQVLRNEVRSYDIDLGLAQIYPVWDEDTSDERMAVSASLADPYIAILRDDSTLMILQADDSGDLDEVELNEAARAGKWRSCCLYWDKAEFFSSTGPALKQGTRCELFLFLLSIDCRLYVYRLPDQQLISVIEGIDCLPPILSTELPKRSTTREVLSEAVIADLGESWNPSPHLILRTESDDLVIYKAFASYIKGESHTRLSFVKESNHTLPRVTTSEKEMQSNEKLSRPRSLRILPNISNFSAVFMPGRPASFILKTAKSCPHVFRLRGEFVRSLSIFDLASPSLDTGFIYVDSKDVLRICRFPSETLFDYTWALRKISIGEQVDHLAYATSSETYVLGTSHSADFKLPDDDELHPDWRNEGLVISFLPELRQCSLKVVSPRTWTVIDSYSLGPDEYVMAVKNMDLEVSENTHERRNMIVVGTAFARGEDIPSRGCIYVFEVIKVVPDPEKPETDRKLKLIGKELVKGAVTALSQIGGQGFLIAAQGQKCMVRGLKEDGSLLPVAFMDMQCYVNVLKELKGTGMCIMGDAVKGLWFAGYSEEPYKMSLFGKDQGYLEVVAAEFLPDGDKLFILVADSDCNLHVLQYDPEDPKSSNGDRLLARSKFHMGHFATTMTLLPRTMVSSEKAMANPDSMEIDSQTISQQVLITSQSGSVGIVTSVPEESYRRLSALQSQLANSLEHPCGLNPRAYRAVESDGTAGRGMLDGNLLYQWLDMGQHRKMEIAARVGAHEWEIKADLEAIGAEGLGYL.

The disordered stretch occupies residues 434–489 (SWSSMPNPKKSRPRMSNVAEDREEASDDSQSEEDAYEDDLYTAEPETPALGRRPSA). Residues 454-474 (DREEASDDSQSEEDAYEDDLY) are compositionally biased toward acidic residues.

It belongs to the CFT1 family.

Its subcellular location is the nucleus. RNA-binding component of the cleavage and polyadenylation factor (CPF) complex, which plays a key role in polyadenylation-dependent pre-mRNA 3'-end formation and cooperates with cleavage factors including the CFIA complex and NAB4/CFIB. Involved in poly(A) site recognition. May be involved in coupling transcription termination and mRNA 3'-end formation. This Aspergillus fumigatus (strain ATCC MYA-4609 / CBS 101355 / FGSC A1100 / Af293) (Neosartorya fumigata) protein is Protein cft1 (cft1).